Here is a 68-residue protein sequence, read N- to C-terminus: DNA-directed RNA polymerase subunit Rpo10 (68 aa).

Zn(2+)-binding residues include cysteine 7, cysteine 10, cysteine 44, and cysteine 45.

This sequence belongs to the archaeal Rpo10/eukaryotic RPB10 RNA polymerase subunit family. In terms of assembly, part of the RNA polymerase complex. Requires Zn(2+) as cofactor.

It localises to the cytoplasm. The enzyme catalyses RNA(n) + a ribonucleoside 5'-triphosphate = RNA(n+1) + diphosphate. Its function is as follows. DNA-dependent RNA polymerase (RNAP) catalyzes the transcription of DNA into RNA using the four ribonucleoside triphosphates as substrates. The chain is DNA-directed RNA polymerase subunit Rpo10 from Methanococcus maripaludis (strain DSM 14266 / JCM 13030 / NBRC 101832 / S2 / LL).